Consider the following 329-residue polypeptide: MFKWLLKHRSKPTPLELGIFDQKVSFWKPFLLFCPALLTTFLFTLVPFFLTLQKGFSHNEDIYRVDSQQFGFQTFANLFSESNFILGLRNSFLYSIISLPLTIVLAIIISSAIVFVYRKLARGFWQTVFFLPYVTSGVAVSIAFIYILDSSSGILNNIFHVNIKWLDSGERDTFNALWGILIFGIWKNMAFNVLVISTAMLSVDPTLYKVANLDGAKPIRQFFKITLPSIRPTLIFLLTLLILGGMQVFPISLFNGNDSEAVTNGGSTILLYIFQKIRDQNNNFAGAATLVLFILGVCYGLVLRNGFRLIEWAQWKIKRHYVQTKLNLV.

Helical transmembrane passes span 30-50 (FLLF…PFFL), 96-116 (IISL…IVFV), 128-148 (VFFL…IYIL), 176-196 (ALWG…VLVI), 234-254 (LIFL…ISLF), and 283-303 (NFAG…GLVL). The 216-residue stretch at 88–303 (LRNSFLYSII…ILGVCYGLVL (216 aa)) folds into the ABC transmembrane type-1 domain.

This sequence belongs to the binding-protein-dependent transport system permease family. MalFG subfamily.

The protein resides in the cell membrane. Its function is as follows. Probably part of a binding-protein-dependent transport system. Probably responsible for the translocation of the substrate across the membrane. The chain is Probable ABC transporter permease protein MG188 homolog from Mycoplasma pneumoniae (strain ATCC 29342 / M129 / Subtype 1) (Mycoplasmoides pneumoniae).